We begin with the raw amino-acid sequence, 386 residues long: 1-deoxy-D-xylulose 5-phosphate reductoisomerase (386 aa).

Residues T7, G8, S9, I10, A33, and N124 each coordinate NADPH. Residue K125 participates in 1-deoxy-D-xylulose 5-phosphate binding. Residue E126 coordinates NADPH. A Mn(2+)-binding site is contributed by D148. Positions 149, 150, 174, and 197 each coordinate 1-deoxy-D-xylulose 5-phosphate. A Mn(2+)-binding site is contributed by E150. NADPH is bound at residue G203. Positions 210, 215, 216, and 219 each coordinate 1-deoxy-D-xylulose 5-phosphate. E219 is a Mn(2+) binding site.

This sequence belongs to the DXR family. The cofactor is Mg(2+). It depends on Mn(2+) as a cofactor.

The catalysed reaction is 2-C-methyl-D-erythritol 4-phosphate + NADP(+) = 1-deoxy-D-xylulose 5-phosphate + NADPH + H(+). The protein operates within isoprenoid biosynthesis; isopentenyl diphosphate biosynthesis via DXP pathway; isopentenyl diphosphate from 1-deoxy-D-xylulose 5-phosphate: step 1/6. Functionally, catalyzes the NADPH-dependent rearrangement and reduction of 1-deoxy-D-xylulose-5-phosphate (DXP) to 2-C-methyl-D-erythritol 4-phosphate (MEP). The chain is 1-deoxy-D-xylulose 5-phosphate reductoisomerase from Kitasatospora griseola (Streptomyces griseolosporeus).